The chain runs to 344 residues: Heat-inducible transcription repressor HrcA (344 aa).

It belongs to the HrcA family.

In terms of biological role, negative regulator of class I heat shock genes (grpE-dnaK-dnaJ and groELS operons). Prevents heat-shock induction of these operons. The polypeptide is Heat-inducible transcription repressor HrcA (Geobacillus stearothermophilus (Bacillus stearothermophilus)).